The sequence spans 218 residues: Pyridoxine/pyridoxamine 5'-phosphate oxidase (218 aa).

Substrate-binding positions include 14-17 (RREY) and Lys-72. FMN is bound by residues 67-72 (RIVLLK), 82-83 (YT), Arg-88, Lys-89, and Gln-111. Residues Tyr-129, Arg-133, and Ser-137 each contribute to the substrate site. FMN is bound by residues 146 to 147 (QS) and Trp-191. 197 to 199 (RLH) serves as a coordination point for substrate. Arg-201 contacts FMN.

The protein belongs to the pyridoxamine 5'-phosphate oxidase family. Homodimer. FMN is required as a cofactor.

It carries out the reaction pyridoxamine 5'-phosphate + O2 + H2O = pyridoxal 5'-phosphate + H2O2 + NH4(+). It catalyses the reaction pyridoxine 5'-phosphate + O2 = pyridoxal 5'-phosphate + H2O2. Its pathway is cofactor metabolism; pyridoxal 5'-phosphate salvage; pyridoxal 5'-phosphate from pyridoxamine 5'-phosphate: step 1/1. It participates in cofactor metabolism; pyridoxal 5'-phosphate salvage; pyridoxal 5'-phosphate from pyridoxine 5'-phosphate: step 1/1. Its function is as follows. Catalyzes the oxidation of either pyridoxine 5'-phosphate (PNP) or pyridoxamine 5'-phosphate (PMP) into pyridoxal 5'-phosphate (PLP). The polypeptide is Pyridoxine/pyridoxamine 5'-phosphate oxidase (Enterobacter sp. (strain 638)).